Reading from the N-terminus, the 469-residue chain is Adenosylhomocysteinase (469 aa).

3 residues coordinate substrate: threonine 63, aspartate 139, and glutamate 164. 165 to 167 (TTT) provides a ligand contact to NAD(+). Residues lysine 194 and aspartate 198 each contribute to the substrate site. Residues asparagine 199, 228 to 233 (GYGDVG), glutamate 251, asparagine 300, 321 to 323 (IGH), and asparagine 375 contribute to the NAD(+) site.

The protein belongs to the adenosylhomocysteinase family. Requires NAD(+) as cofactor.

It localises to the cytoplasm. The enzyme catalyses S-adenosyl-L-homocysteine + H2O = L-homocysteine + adenosine. It participates in amino-acid biosynthesis; L-homocysteine biosynthesis; L-homocysteine from S-adenosyl-L-homocysteine: step 1/1. Functionally, may play a key role in the regulation of the intracellular concentration of adenosylhomocysteine. The polypeptide is Adenosylhomocysteinase (Pseudomonas putida (strain GB-1)).